A 278-amino-acid polypeptide reads, in one-letter code: Pantothenate synthetase (278 aa).

ATP is bound at residue 26 to 33; that stretch reads MGNLHEGH. His-33 serves as the catalytic Proton donor. A (R)-pantoate-binding site is contributed by Gln-57. Gln-57 is a beta-alanine binding site. 144–147 is a binding site for ATP; that stretch reads GKKD. Residue Gln-150 coordinates (R)-pantoate. Residues Gly-173 and 181-184 contribute to the ATP site; that span reads LSSR.

The protein belongs to the pantothenate synthetase family. As to quaternary structure, homodimer.

The protein localises to the cytoplasm. The catalysed reaction is (R)-pantoate + beta-alanine + ATP = (R)-pantothenate + AMP + diphosphate + H(+). It functions in the pathway cofactor biosynthesis; (R)-pantothenate biosynthesis; (R)-pantothenate from (R)-pantoate and beta-alanine: step 1/1. Functionally, catalyzes the condensation of pantoate with beta-alanine in an ATP-dependent reaction via a pantoyl-adenylate intermediate. The sequence is that of Pantothenate synthetase from Neisseria meningitidis serogroup B (strain ATCC BAA-335 / MC58).